Consider the following 335-residue polypeptide: Cytoskeleton protein RodZ (335 aa).

The Cytoplasmic segment spans residues 1–111 (MNTEATHDQN…LGKRRKKRDG (111 aa)). The HTH cro/C1-type domain occupies 19-71 (LRNAREQLGLSQQAVAERLCLKVSTVRDIEEDKAPADLASTFLRGYIRSYARL). The segment at residues 30-49 (QQAVAERLCLKVSTVRDIEE) is a DNA-binding region (H-T-H motif). The chain crosses the membrane as a helical; Signal-anchor for type II membrane protein span at residues 112-132 (WLMTFTWLVLFVVIGLSGAWW). The Periplasmic portion of the chain corresponds to 133-335 (WQDHKAQQEE…TLNAEQSPAQ (203 aa)). Polar residues predominate over residues 148–164 (DQSSAELNNNQSQSVPL). The segment at 148–244 (DQSSAELNNN…PLPTDQAGVT (97 aa)) is disordered. Low complexity-rich tracts occupy residues 165-205 (DTST…DPQQ) and 217-239 (DTAA…LPTD).

The protein belongs to the RodZ family.

The protein localises to the cell inner membrane. Functionally, cytoskeletal protein that is involved in cell-shape control through regulation of the length of the long axis. The protein is Cytoskeleton protein RodZ of Escherichia coli O81 (strain ED1a).